We begin with the raw amino-acid sequence, 391 residues long: Multidrug resistance protein MdtL (391 aa).

A run of 12 helical transmembrane segments spans residues 4–24 (FLIC…MYLV), 42–62 (IAFS…GKVA), 69–89 (PVAI…SLAE), 93–113 (LFLA…VVAF), 131–151 (LLNG…HLIM), 158–178 (SLFW…LFIL), 203–222 (FFLS…LTFV), 245–265 (ALTA…LGIF), 269–289 (TLMI…AVSP), 293–313 (VSLF…GVAM), 331–351 (LGIA…VVGI), and 356–376 (MLIG…MFVA).

Belongs to the major facilitator superfamily. DHA1 family. MdtL (TC 2.A.1.2.22) subfamily.

Its subcellular location is the cell inner membrane. Confers resistance to chloramphenicol. The chain is Multidrug resistance protein MdtL from Escherichia coli O139:H28 (strain E24377A / ETEC).